A 214-amino-acid polypeptide reads, in one-letter code: Orotate phosphoribosyltransferase (214 aa).

Lys-26 contacts 5-phospho-alpha-D-ribose 1-diphosphate. Residue 34-35 coordinates orotate; that stretch reads FF. 5-phospho-alpha-D-ribose 1-diphosphate-binding positions include 72 to 73, Arg-98, Lys-99, Lys-102, His-104, and 123 to 131; these read YK and DDVISAGTS. Orotate is bound by residues Ser-127 and Arg-155.

Belongs to the purine/pyrimidine phosphoribosyltransferase family. PyrE subfamily. In terms of assembly, homodimer. It depends on Mg(2+) as a cofactor.

It catalyses the reaction orotidine 5'-phosphate + diphosphate = orotate + 5-phospho-alpha-D-ribose 1-diphosphate. It functions in the pathway pyrimidine metabolism; UMP biosynthesis via de novo pathway; UMP from orotate: step 1/2. In terms of biological role, catalyzes the transfer of a ribosyl phosphate group from 5-phosphoribose 1-diphosphate to orotate, leading to the formation of orotidine monophosphate (OMP). This chain is Orotate phosphoribosyltransferase, found in Chromobacterium violaceum (strain ATCC 12472 / DSM 30191 / JCM 1249 / CCUG 213 / NBRC 12614 / NCIMB 9131 / NCTC 9757 / MK).